Reading from the N-terminus, the 560-residue chain is Protein yellow (560 aa).

An N-terminal signal peptide occupies residues 1–30 (MHVQDKGGIGALTALSLLLVAVTMVTPTQA). N-linked (GlcNAc...) asparagine glycosylation is found at N153 and N224. The disordered stretch occupies residues 452-492 (QYRPVLPQKPQTSWGPSPPSRSYLPSLGASPGGPGQVVSSV). Over residues 471–480 (SRSYLPSLGA) the composition is skewed to low complexity.

This sequence belongs to the major royal jelly protein family.

It localises to the secreted. Functionally, controls the pigmentation pattern of the adult cuticle and larval mouth parts. In Drosophila pseudoobscura pseudoobscura (Fruit fly), this protein is Protein yellow (y).